A 243-amino-acid polypeptide reads, in one-letter code: LexA repressor 2 (243 aa).

A DNA-binding region (H-T-H motif) is located at residues 48-68 (IREIGDAVGLTSTSSVAHQLR). Residues serine 167 and lysine 204 each act as for autocatalytic cleavage activity in the active site.

The protein belongs to the peptidase S24 family. In terms of assembly, homodimer.

The catalysed reaction is Hydrolysis of Ala-|-Gly bond in repressor LexA.. In terms of biological role, represses a number of genes involved in the response to DNA damage (SOS response), including recA and lexA. In the presence of single-stranded DNA, RecA interacts with LexA causing an autocatalytic cleavage which disrupts the DNA-binding part of LexA, leading to derepression of the SOS regulon and eventually DNA repair. The sequence is that of LexA repressor 2 from Nocardia farcinica (strain IFM 10152).